Reading from the N-terminus, the 598-residue chain is MSKRSPPPQPAHIPMAEQRWRPPYPYASSAAGGGGVDRRSRSGFCAATRTFHSLRSVGPLPPEELPLTVAAYAFSLLSSAPPLVVAGRGPALVDAATGIAVSYPAFVARVRFLAGGLWCSLGLRPGDVALVVSPSCLDVAVLYFALMSIGVVVSPANPASTADEYAHQVRLSRPAIAFVAPEVAARLPRHVSRVVIGSEVFDRLASASAAGGWAAPPAVAMKQPSTAALLYSSGTTGRVKAVAITHRNLIAQISAYNAIRETVAREAATDAGKGKPPPPSPSPPAAVTLFPLPLFHVMGFGLLTRTISSGETAVVMRRFDLAAAARAVERYRVTKLSAAPPVVVALTKSDEARRRDLSSLVAIVVGGAPLGREVSQRFATVFPSVQIVQSYGLTESTGPVATMAGPEESAAYGSVGRLAPRVQAKIVDTATGEVLGPGRRGELWIRGPVVMKGYVGDPEATAATITPDGWLKTGDLCYFNEDGYLYVVDRLKELIKYKGYQVPPAELEHILQSRPEIADAAVVPYPDEEAGQLPMAFVVRQPGAYLTEQQVMNCVAKHVAPYKKVRRVAFVNAIPKSPAGKILRRELVLQAMASTSRL.

ATP contacts are provided by Ser-232, Ser-233, Gly-234, Thr-235, Thr-236, and Lys-240. Arg-318 provides a ligand contact to CoA. Residues 320–389 (DLAAAARAVE…TVFPSVQIVQ (70 aa)) form an SBD1 region. (E)-4-coumaroyl-AMP is bound by residues Gly-367, Gln-389, and Thr-394. ATP is bound by residues Gln-389, Thr-394, Asp-475, and Arg-490. Residues 390 to 454 (SYGLTESTGP…IRGPVVMKGY (65 aa)) form an SBD2 region. 2 residues coordinate (E)-4-coumaroyl-AMP: Lys-492 and Lys-496. 2 residues coordinate CoA: Lys-498 and Gly-499. Lys-581 provides a ligand contact to ATP.

It belongs to the ATP-dependent AMP-binding enzyme family. It depends on Mg(2+) as a cofactor.

It catalyses the reaction (E)-4-coumarate + ATP + CoA = (E)-4-coumaroyl-CoA + AMP + diphosphate. The enzyme catalyses (E)-4-coumarate + ATP + H(+) = (E)-4-coumaroyl-AMP + diphosphate. The catalysed reaction is (E)-4-coumaroyl-AMP + CoA = (E)-4-coumaroyl-CoA + AMP + H(+). Carboxylate--CoA ligase that may use 4-coumarate as substrate. Follows a two-step reaction mechanism, wherein the carboxylate substrate first undergoes adenylation by ATP, followed by a thioesterification in the presence of CoA to yield the final CoA thioester. This Oryza sativa subsp. japonica (Rice) protein is 4-coumarate--CoA ligase-like 6 (4CLL6).